The chain runs to 807 residues: uncharacterized protein (807 aa).

The signal sequence occupies residues 1–18 (MNTVLFVILLAAIGSNHG). Over 19–704 (LIDERLTVNR…GLFTDIFGGE (686 aa)) the chain is Extracellular. Over residues 133–142 (TTTTAAPQTG) the composition is skewed to polar residues. Residues 133 to 171 (TTTTAAPQTGNRRRRRAAGDEPNTDDNTPPNLEIPDWLD) are disordered. N277 and N660 each carry an N-linked (GlcNAc...) asparagine; by host glycan. Residues 705–725 (VWAVIAAIFSPVFLTAFALII) traverse the membrane as a helical segment. Over 726-807 (SLINFIPAVR…GERQVISRTN (82 aa)) the chain is Cytoplasmic.

It is found in the host membrane. This is an uncharacterized protein from Magallana gigas (Pacific oyster).